Consider the following 261-residue polypeptide: tRNA U34 carboxymethyltransferase (261 aa).

Carboxy-S-adenosyl-L-methionine contacts are provided by residues Lys-25, Trp-39, Lys-44, Gly-63, 114-115, Tyr-135, and Arg-250; that span reads VE.

Belongs to the class I-like SAM-binding methyltransferase superfamily. CmoB family. As to quaternary structure, homotetramer.

The enzyme catalyses carboxy-S-adenosyl-L-methionine + 5-hydroxyuridine(34) in tRNA = 5-carboxymethoxyuridine(34) in tRNA + S-adenosyl-L-homocysteine + H(+). Functionally, catalyzes carboxymethyl transfer from carboxy-S-adenosyl-L-methionine (Cx-SAM) to 5-hydroxyuridine (ho5U) to form 5-carboxymethoxyuridine (cmo5U) at position 34 in tRNAs. This is tRNA U34 carboxymethyltransferase from Helicobacter pylori (strain Shi470).